A 99-amino-acid polypeptide reads, in one-letter code: Large ribosomal subunit protein eL21 (99 aa).

The protein belongs to the eukaryotic ribosomal protein eL21 family.

This is Large ribosomal subunit protein eL21 from Pyrobaculum calidifontis (strain DSM 21063 / JCM 11548 / VA1).